The following is a 545-amino-acid chain: Chaperonin GroEL (545 aa).

Residues 30-33 (TLGP), Lys-51, 87-91 (DGTTT), Gly-415, 479-481 (NAA), and Asp-495 each bind ATP. Residues 526 to 545 (KEDKPDLGNAGAGGNMGGMM) are disordered. A compositionally biased stretch (gly residues) spans 535 to 545 (AGAGGNMGGMM).

This sequence belongs to the chaperonin (HSP60) family. In terms of assembly, forms a cylinder of 14 subunits composed of two heptameric rings stacked back-to-back. Interacts with the co-chaperonin GroES.

Its subcellular location is the cytoplasm. The catalysed reaction is ATP + H2O + a folded polypeptide = ADP + phosphate + an unfolded polypeptide.. Its function is as follows. Together with its co-chaperonin GroES, plays an essential role in assisting protein folding. The GroEL-GroES system forms a nano-cage that allows encapsulation of the non-native substrate proteins and provides a physical environment optimized to promote and accelerate protein folding. The chain is Chaperonin GroEL from Blochmanniella pennsylvanica (strain BPEN).